The chain runs to 345 residues: Beta-2-glycoprotein 1 (345 aa).

A signal peptide spans 1–19 (MISPVLILFSSFLCHVAIA). 4 Sushi domains span residues 21 to 81 (RTCP…KCTP), 82 to 139 (RVCP…VCAP), 140 to 202 (ITCP…ECRE), and 203 to 262 (VKCP…SCKA). Intrachain disulfides connect C23-C66, C51-C79, C84-C124, C110-C137, C142-C188, C174-C200, C205-C248, C234-C260, C264-C315, C300-C325, and C307-C345. T33 carries O-linked (GalNAc...) threonine glycosylation. Residue T149 is glycosylated (O-linked (GalNAc...) threonine). 3 N-linked (GlcNAc...) asparagine glycosylation sites follow: N162, N183, and N193. N253 carries N-linked (GlcNAc...) asparagine glycosylation. The interval 263 to 345 (SCKVPVKKAT…KTDASDVKPC (83 aa)) is sushi-like.

As to expression, expressed by the liver and secreted in plasma.

The protein localises to the secreted. Functionally, binds to various kinds of negatively charged substances such as heparin, phospholipids, and dextran sulfate. May prevent activation of the intrinsic blood coagulation cascade by binding to phospholipids on the surface of damaged cells. This Pan troglodytes (Chimpanzee) protein is Beta-2-glycoprotein 1 (APOH).